The following is a 354-amino-acid chain: Putative [LysW]-L-2-aminoadipate/[LysW]-L-glutamate phosphate reductase (354 aa).

Residues 10–13 (SGVI) and 34–36 (SRR) each bind NADP(+). The active site involves Cys153. An NADP(+)-binding site is contributed by Asn321.

The protein belongs to the NAGSA dehydrogenase family. Type 1 subfamily. LysY sub-subfamily.

The protein resides in the cytoplasm. The catalysed reaction is [amino-group carrier protein]-C-terminal-N-(1-carboxy-5-oxopentan-1-yl)-L-glutamine + phosphate + NADP(+) = [amino-group carrier protein]-C-terminal-N-(1-carboxy-5-phosphooxy-5-oxopentan-1-yl)-L-glutamine + NADPH + H(+). It carries out the reaction [amino-group carrier protein]-C-terminal-gamma-(L-glutamyl-5-semialdehyde)-L-glutamate + phosphate + NADP(+) = [amino-group carrier protein]-C-terminal-gamma-(5-phospho-L-glutamyl)-L-glutamate + NADPH + H(+). The protein operates within amino-acid biosynthesis; L-lysine biosynthesis via AAA pathway; L-lysine from L-alpha-aminoadipate (Thermus route): step 3/5. It functions in the pathway amino-acid biosynthesis; L-arginine biosynthesis. Involved in both the arginine and lysine biosynthetic pathways. This chain is Putative [LysW]-L-2-aminoadipate/[LysW]-L-glutamate phosphate reductase, found in Caldivirga maquilingensis (strain ATCC 700844 / DSM 13496 / JCM 10307 / IC-167).